A 227-amino-acid polypeptide reads, in one-letter code: Protein M1425_1941 (227 aa).

Residues 15 to 209 form the AMMECR1 domain; sequence EIGRFLIEIA…ETRPDGSDII (195 aa).

In Saccharolobus islandicus (strain M.14.25 / Kamchatka #1) (Sulfolobus islandicus), this protein is Protein M1425_1941.